We begin with the raw amino-acid sequence, 957 residues long: MTQTLSQLENSGAFIERHIGPDAAQQQEMLNAVGAQSLNALTGQIVPKDIQLATPPQVGAPATEYAALAELKAIASRNKRFTSYIGMGYTAVQLPPVILRNMLENPGWYTAYTPYQPEVSQGRLEALLNFQQVTLDLTGLDMASASLLDEATAAAEAMAMAKRVSKLKNANRFFVASDVHPQTLDVVRTRAETFGFEVIVDDAQKVLDHQDIFGVLLQQVGTTGEIHDYTALISELKSRKIVVSVAADIMALVLLTAPGKQGADIVFGSAQRFGVPMGYGGPHAAFFAAKDEYKRSMPGRIIGVSKDAAGNTALRMAMQTREQHIRREKANSNICTSQVLLANIASLYAVYHGPIGLKRIANRIHRLTDILAAGLQQKGLKLRHAHYFDTLCVEVADKAGVLARAEAAEINLRSDILNAVGITLDETTTRENVMQLFSVLLGDNHGLDIDTLDKDVAHDSRSIQPAMLRDDEILTHPVFNRYHSETEMMRYMHSLERKDLALNQAMIPLGSCTMKLNAAAEMIPITWPEFAELHPFCPPEQAEGYQQMIAQLADWLVKLTGYDAVCMQPNSGAQGEYAGLLAIRHYHESRNEGHRDICLIPASAHGTNPASAHMAGMQVVVVACDKNGNIDLTDLRAKAEQAGDNLSCIMVTYPSTHGVYEETIREVCEVVHQFGGQVYLDGANMNAQVGITSPGFIGADVSHLNLHKTFCIPHGGGGPGMGPIGVKAHLAPFVPGHSVVQIEGMLTRQGAVSAAPFGSASILPISWMYIRMMGAEGLKKASQVAILNANYIASRLQDAFPVLYTGRDGRVAHECILDIRPLKEETGISELDIAKRLIDYGFHAPTMSFPVAGTLMVEPTESESKVELDRFIDAMLAIRAEIDQVKAGVWPLEDNPLVNAPHIQSELVAEWAHPYSREVAVFPAGVADKYWPTVKRLDDVYGDRNLFCSCVPISEYQ.

K708 is modified (N6-(pyridoxal phosphate)lysine).

Belongs to the GcvP family. In terms of assembly, the glycine cleavage system is composed of four proteins: P, T, L and H. The cofactor is pyridoxal 5'-phosphate.

It carries out the reaction N(6)-[(R)-lipoyl]-L-lysyl-[glycine-cleavage complex H protein] + glycine + H(+) = N(6)-[(R)-S(8)-aminomethyldihydrolipoyl]-L-lysyl-[glycine-cleavage complex H protein] + CO2. Functionally, the glycine cleavage system catalyzes the degradation of glycine. The P protein binds the alpha-amino group of glycine through its pyridoxal phosphate cofactor; CO(2) is released and the remaining methylamine moiety is then transferred to the lipoamide cofactor of the H protein. This is Glycine dehydrogenase (decarboxylating) from Escherichia coli O157:H7.